We begin with the raw amino-acid sequence, 129 residues long: uncharacterized protein (129 aa).

Residues 1–27 form the signal peptide; the sequence is MLMRKKKLLSRISFGSLFLLCGTILSA. Cys-28 carries N-palmitoyl cysteine lipidation. Residue Cys-28 is the site of S-diacylglycerol cysteine attachment.

This sequence belongs to the MG439/MG440 family.

It localises to the cell membrane. This is an uncharacterized protein from Mycoplasma pneumoniae (strain ATCC 29342 / M129 / Subtype 1) (Mycoplasmoides pneumoniae).